An 84-amino-acid chain; its full sequence is Cytochrome b559 subunit alpha (84 aa).

At 2-20 (AGTTGERPFSDIITSVRYW) the chain is on the cytoplasmic side. The helical transmembrane segment at 21–35 (VIHSITIPALFIAGW) threads the bilayer. H23 contacts heme. At 36–84 (LFVSTGLAYDVFGTPRPDSYYAQEQRSIPLVTDRFEAKQQVETFLEQLK) the chain is on the lumenal side.

It belongs to the PsbE/PsbF family. Heterodimer of an alpha subunit and a beta subunit. PSII is composed of 1 copy each of membrane proteins PsbA, PsbB, PsbC, PsbD, PsbE, PsbF, PsbH, PsbI, PsbJ, PsbK, PsbL, PsbM, PsbT, PsbX, PsbY, PsbZ, Psb30/Ycf12, peripheral proteins PsbO, CyanoQ (PsbQ), PsbU, PsbV and a large number of cofactors. It forms dimeric complexes. Requires heme b as cofactor.

The protein localises to the cellular thylakoid membrane. Its function is as follows. This b-type cytochrome is tightly associated with the reaction center of photosystem II (PSII). PSII is a light-driven water:plastoquinone oxidoreductase that uses light energy to abstract electrons from H(2)O, generating O(2) and a proton gradient subsequently used for ATP formation. It consists of a core antenna complex that captures photons, and an electron transfer chain that converts photonic excitation into a charge separation. The sequence is that of Cytochrome b559 subunit alpha from Thermostichus vulcanus (Synechococcus vulcanus).